Reading from the N-terminus, the 514-residue chain is Maturase K (514 aa).

This sequence belongs to the intron maturase 2 family. MatK subfamily.

It is found in the plastid. It localises to the chloroplast. Its function is as follows. Usually encoded in the trnK tRNA gene intron. Probably assists in splicing its own and other chloroplast group II introns. This chain is Maturase K, found in Lepidozamia peroffskyana (Peroffsky's lepidozamia).